The following is a 252-amino-acid chain: MYLHDVWVNWFEGEENGYNVCHFHEWRKEDTIELLDQVPLLYISKELLHYIENDMHDLPKSLLDTIYKRGYTRKGQKRTVVEYAAVVTDGDNILAFDTVGYYIPIRKSRLIPRQEQLVYDMIENNKPQNFEFDNKIHDKEYHMLSMPPEYVFGLTRKERQLKQLLMIGLDQLRTTNNKEELRYWLTEWDPKQYPSIRYMDEEQVWTALYDGVKHGWSSAHEDLCSKLIRGQAFLERMWEAEMGNEQHTSNQK.

It belongs to the UPF0736 family.

The chain is UPF0736 protein OB1207 from Oceanobacillus iheyensis (strain DSM 14371 / CIP 107618 / JCM 11309 / KCTC 3954 / HTE831).